Reading from the N-terminus, the 787-residue chain is Serine proteinase stubble (787 aa).

The disordered stretch occupies residues 1–22 (MKQPTLIRPRLRHRRSTPAAAT). The Cytoplasmic segment spans residues 1-58 (MKQPTLIRPRLRHRRSTPAAATKMCPKRHWLVNNRAAGSRGSGGAAARSRRSLDQIVE). The chain crosses the membrane as a helical; Signal-anchor for type II membrane protein span at residues 59-80 (VLVALIVVNCLATAAAALITPP). The Extracellular portion of the chain corresponds to 81 to 787 (DSLESLGSLG…FTPWILEHVR (707 aa)). N-linked (GlcNAc...) asparagine glycosylation is present at Asn-177. Positions 225-516 (AGTLVIRPSG…EISDSSIPDA (292 aa)) are disordered. Composition is skewed to low complexity over residues 262 to 280 (SASHPSSSSSSSSSSNPNS), 287 to 303 (QQQQQQQHQQNQQNHWQ), 358 to 368 (PSTSTSTTSTS), 393 to 438 (SLAA…RTTT), and 449 to 485 (TTATSSSSTSTTSSKTPTTTRPISSSSSSSSGIVTSS). Residues 502 to 512 (GIETNEISDSS) are compositionally biased toward polar residues. 2 disulfides stabilise this stretch: Cys-532/Cys-660 and Cys-575/Cys-591. Residues 544–787 (IVGGKSAAFG…FTPWILEHVR (244 aa)) form the Peptidase S1 domain. Residues His-590 and Asp-640 each act as charge relay system in the active site. N-linked (GlcNAc...) asparagine glycosylation occurs at Asn-672. Disulfide bonds link Cys-704/Cys-723 and Cys-734/Cys-763. Catalysis depends on Ser-738, which acts as the Charge relay system.

Belongs to the peptidase S1 family. Post-translationally, may activate itself by proteolytic cleavage.

It localises to the membrane. Its function is as follows. Hormone dependent protease required for epithelial morphogenesis, including the formation of bristles, legs, and wings. Has a dual function, detaches imaginal disk cells from extracellular matrices through its extracellular proteolytic domain and transmits an outside-to-inside signal to its intracellular domain to modify the cytoskeleton during morphogenesis. In Drosophila melanogaster (Fruit fly), this protein is Serine proteinase stubble (Sb).